Here is a 622-residue protein sequence, read N- to C-terminus: 1,4-alpha-glucan branching enzyme GlgB (622 aa).

The active-site Nucleophile is the D300. E351 serves as the catalytic Proton donor.

It belongs to the glycosyl hydrolase 13 family. GlgB subfamily. As to quaternary structure, monomer.

It catalyses the reaction Transfers a segment of a (1-&gt;4)-alpha-D-glucan chain to a primary hydroxy group in a similar glucan chain.. It participates in glycan biosynthesis; glycogen biosynthesis. In terms of biological role, catalyzes the formation of the alpha-1,6-glucosidic linkages in glycogen by scission of a 1,4-alpha-linked oligosaccharide from growing alpha-1,4-glucan chains and the subsequent attachment of the oligosaccharide to the alpha-1,6 position. In Streptococcus agalactiae serotype V (strain ATCC BAA-611 / 2603 V/R), this protein is 1,4-alpha-glucan branching enzyme GlgB.